A 463-amino-acid polypeptide reads, in one-letter code: FAD-dependent monooxygenase ausM (463 aa).

Residues Glu-40, Gly-54, and Arg-113 each contribute to the FAD site. Tyr-217 is a catalytic residue. FAD-binding residues include Asp-309 and Ala-322. The chain crosses the membrane as a helical span at residues Val-443–Ala-463.

Belongs to the paxM FAD-dependent monooxygenase family. FAD is required as a cofactor.

The protein localises to the membrane. It functions in the pathway secondary metabolite biosynthesis; terpenoid biosynthesis. FAD-dependent monooxygenase; part of the gene cluster that mediates the biosynthesis of calidodehydroaustin, a fungal meroterpenoid. The first step of the pathway is the synthesis of 3,5-dimethylorsellinic acid by the polyketide synthase ausA. 3,5-dimethylorsellinic acid is then prenylated by the polyprenyl transferase ausN. Further epoxidation by the FAD-dependent monooxygenase ausM and cyclization by the probable terpene cyclase ausL lead to the formation of protoaustinoid A. Protoaustinoid A is then oxidized to spiro-lactone preaustinoid A3 by the combined action of the FAD-binding monooxygenases ausB and ausC, and the dioxygenase ausE. Acid-catalyzed keto-rearrangement and ring contraction of the tetraketide portion of preaustinoid A3 by ausJ lead to the formation of preaustinoid A4. The aldo-keto reductase ausK, with the help of ausH, is involved in the next step by transforming preaustinoid A4 into isoaustinone which is in turn hydroxylated by the P450 monooxygenase ausI to form austinolide. The cytochrome P450 monooxygenase ausG modifies austinolide to austinol. Austinol is further acetylated to austin by the O-acetyltransferase ausP, which spontaneously changes to dehydroaustin. The cytochrome P450 monooxygenase ausR then converts dehydroaustin is into 7-dehydrodehydroaustin. The hydroxylation catalyzed by ausR permits the O-acetyltransferase ausQ to add an additional acetyl group to the molecule, leading to the formation of acetoxydehydroaustin. The short chain dehydrogenase ausT catalyzes the reduction of the double bond present between carbon atoms 1 and 2 to convert 7-dehydrodehydroaustin into 1,2-dihydro-7-hydroxydehydroaustin. AusQ catalyzes not only an acetylation reaction but also the addition of the PKS ausV diketide product to 1,2-dihydro-7-hydroxydehydroaustin, forming precalidodehydroaustin. Finally, the iron/alpha-ketoglutarate-dependent dioxygenase converts precalidodehydroaustin into calidodehydroaustin. The polypeptide is FAD-dependent monooxygenase ausM (Aspergillus calidoustus).